The primary structure comprises 379 residues: Queuine tRNA-ribosyltransferase (379 aa).

The active-site Proton acceptor is the aspartate 94. Substrate contacts are provided by residues 94–98, aspartate 148, glutamine 191, and glycine 218; that span reads DSGGF. Residues 249-255 are RNA binding; sequence GVGSPDA. Aspartate 268 acts as the Nucleophile in catalysis. Residues 273-277 form an RNA binding; important for wobble base 34 recognition region; sequence TRIAR. Zn(2+) contacts are provided by cysteine 306, cysteine 308, cysteine 311, and histidine 337.

This sequence belongs to the queuine tRNA-ribosyltransferase family. As to quaternary structure, homodimer. Within each dimer, one monomer is responsible for RNA recognition and catalysis, while the other monomer binds to the replacement base PreQ1. Requires Zn(2+) as cofactor.

It carries out the reaction 7-aminomethyl-7-carbaguanine + guanosine(34) in tRNA = 7-aminomethyl-7-carbaguanosine(34) in tRNA + guanine. It participates in tRNA modification; tRNA-queuosine biosynthesis. Catalyzes the base-exchange of a guanine (G) residue with the queuine precursor 7-aminomethyl-7-deazaguanine (PreQ1) at position 34 (anticodon wobble position) in tRNAs with GU(N) anticodons (tRNA-Asp, -Asn, -His and -Tyr). Catalysis occurs through a double-displacement mechanism. The nucleophile active site attacks the C1' of nucleotide 34 to detach the guanine base from the RNA, forming a covalent enzyme-RNA intermediate. The proton acceptor active site deprotonates the incoming PreQ1, allowing a nucleophilic attack on the C1' of the ribose to form the product. After dissociation, two additional enzymatic reactions on the tRNA convert PreQ1 to queuine (Q), resulting in the hypermodified nucleoside queuosine (7-(((4,5-cis-dihydroxy-2-cyclopenten-1-yl)amino)methyl)-7-deazaguanosine). The polypeptide is Queuine tRNA-ribosyltransferase (Staphylococcus aureus (strain bovine RF122 / ET3-1)).